The sequence spans 474 residues: Gasdermin-C (474 aa).

The tract at residues 1–237 (MLYTFDQVSK…TCAILLSANA (237 aa)) is triggers pyroptosis.

The protein belongs to the gasdermin family. As to quaternary structure, homooligomer; homooligomeric ring-shaped pore complex containing 27-28 subunits when inserted in the membrane. Cleavage by CASP8 relieves autoinhibition by releasing the N-terminal moiety (Gasdermin-C, N-terminal) that initiates pyroptosis. Post-translationally, palmitoylated.

The protein resides in the cytoplasm. It is found in the cytosol. It localises to the cell membrane. Its activity is regulated as follows. The full-length protein before cleavage is inactive: intramolecular interactions between N- and C-terminal domains mediate autoinhibition in the absence of activation signal. The intrinsic pyroptosis-inducing activity is carried by the released N-terminal moiety (Gasdermin-C, N-terminal) following cleavage by caspase CASP8. Its function is as follows. This form constitutes the precursor of the pore-forming protein: upon cleavage, the released N-terminal moiety (Gasdermin-C, N-terminal) binds to membranes and forms pores, triggering pyroptosis. Pore-forming protein that causes membrane permeabilization and pyroptosis. Produced by the cleavage of gasdermin-C by caspase CASP8 in response to death signals. After cleavage, moves to the plasma membrane where it strongly binds to membrane inner leaflet lipids. Homooligomerizes within the membrane and forms pores of 10-15 nanometers (nm) of inner diameter, triggering pyroptosis. This Rattus norvegicus (Rat) protein is Gasdermin-C.